A 91-amino-acid polypeptide reads, in one-letter code: Small ribosomal subunit protein bS18 (91 aa).

It belongs to the bacterial ribosomal protein bS18 family. As to quaternary structure, part of the 30S ribosomal subunit. Forms a tight heterodimer with protein bS6.

Binds as a heterodimer with protein bS6 to the central domain of the 16S rRNA, where it helps stabilize the platform of the 30S subunit. This chain is Small ribosomal subunit protein bS18, found in Paraburkholderia phymatum (strain DSM 17167 / CIP 108236 / LMG 21445 / STM815) (Burkholderia phymatum).